We begin with the raw amino-acid sequence, 569 residues long: Protein Noxp20 (569 aa).

Disordered regions lie at residues 1-87 (MSDD…GEVT), 102-126 (GDTG…QAGR), and 165-208 (ANSA…GSRG). Threonine 197 bears the Phosphothreonine mark. A Phosphoserine modification is found at serine 262. The disordered stretch occupies residues 404–439 (VSIDVAKGSEEEEKEEGKEEKAEEPEEDKTGGQGAK).

The protein belongs to the FAM114 family. Over-expressed in brain. Also detected in lung, stomach, and in a lower extent in testis and thymus.

The protein localises to the cytoplasm. May play a role in neuronal cell development. This is Protein Noxp20 (Fam114a1) from Mus musculus (Mouse).